We begin with the raw amino-acid sequence, 161 residues long: Large ribosomal subunit protein uL15 (161 aa).

Residues 1-43 (MKLSEISDNPGARKKRMRIGRGIGSGKGKTGGRGGKGQTARSG) are disordered. A compositionally biased stretch (gly residues) spans 21-37 (RGIGSGKGKTGGRGGKG).

It belongs to the universal ribosomal protein uL15 family. In terms of assembly, part of the 50S ribosomal subunit.

Functionally, binds to the 23S rRNA. The protein is Large ribosomal subunit protein uL15 of Rhodopseudomonas palustris (strain BisB5).